The following is a 641-amino-acid chain: 1-deoxy-D-xylulose-5-phosphate synthase (641 aa).

Thiamine diphosphate-binding positions include His79 and 120–122; that span reads GHS. Asp151 is a Mg(2+) binding site. Residues 152-153, Asn180, Tyr290, and Glu372 contribute to the thiamine diphosphate site; that span reads GS. Asn180 contributes to the Mg(2+) binding site.

Belongs to the transketolase family. DXPS subfamily. In terms of assembly, homodimer. It depends on Mg(2+) as a cofactor. Thiamine diphosphate is required as a cofactor.

The catalysed reaction is D-glyceraldehyde 3-phosphate + pyruvate + H(+) = 1-deoxy-D-xylulose 5-phosphate + CO2. It participates in metabolic intermediate biosynthesis; 1-deoxy-D-xylulose 5-phosphate biosynthesis; 1-deoxy-D-xylulose 5-phosphate from D-glyceraldehyde 3-phosphate and pyruvate: step 1/1. Catalyzes the acyloin condensation reaction between C atoms 2 and 3 of pyruvate and glyceraldehyde 3-phosphate to yield 1-deoxy-D-xylulose-5-phosphate (DXP). The protein is 1-deoxy-D-xylulose-5-phosphate synthase of Rhodopseudomonas palustris (strain TIE-1).